The chain runs to 282 residues: Parvulin-like PPIase (282 aa).

Residues 1 to 20 (MKKLSVIFLSVSMLSSIAFG) form the signal peptide. The 94-residue stretch at 138–231 (KEQIKVAHIL…FGWHIIKVLE (94 aa)) folds into the PpiC domain.

The protein belongs to the PpiC/parvulin rotamase family.

Its subcellular location is the cell outer membrane. The catalysed reaction is [protein]-peptidylproline (omega=180) = [protein]-peptidylproline (omega=0). The protein is Parvulin-like PPIase (plp) of Rickettsia prowazekii (strain Madrid E).